The sequence spans 278 residues: Indole-3-glycerol phosphate synthase (278 aa).

It belongs to the TrpC family.

The enzyme catalyses 1-(2-carboxyphenylamino)-1-deoxy-D-ribulose 5-phosphate + H(+) = (1S,2R)-1-C-(indol-3-yl)glycerol 3-phosphate + CO2 + H2O. The protein operates within amino-acid biosynthesis; L-tryptophan biosynthesis; L-tryptophan from chorismate: step 4/5. This is Indole-3-glycerol phosphate synthase from Pseudomonas aeruginosa (strain UCBPP-PA14).